The following is a 264-amino-acid chain: uncharacterized protein (264 aa).

A helical membrane pass occupies residues 7–27; sequence LTLGICLVLLIILIVGYVIMT.

It belongs to the staphylococcal tandem lipoprotein family.

The protein resides in the cell membrane. This is an uncharacterized protein from Staphylococcus aureus (strain N315).